Here is a 238-residue protein sequence, read N- to C-terminus: Zinc import ATP-binding protein ZnuC (238 aa).

Residues 5 to 220 (ITLKNIHVSF…LEFISIFGLK (216 aa)) enclose the ABC transporter domain. 37–44 (GPNGAGKS) is a binding site for ATP.

Belongs to the ABC transporter superfamily. Zinc importer (TC 3.A.1.15.5) family. In terms of assembly, the complex is composed of two ATP-binding proteins (ZnuC), two transmembrane proteins (ZnuB) and a solute-binding protein (ZnuA).

It is found in the cell inner membrane. The enzyme catalyses Zn(2+)(out) + ATP(in) + H2O(in) = Zn(2+)(in) + ADP(in) + phosphate(in) + H(+)(in). Functionally, part of the ABC transporter complex ZnuABC involved in zinc import. Responsible for energy coupling to the transport system. In Buchnera aphidicola subsp. Schizaphis graminum (strain Sg), this protein is Zinc import ATP-binding protein ZnuC.